Consider the following 410-residue polypeptide: Serine hydroxymethyltransferase (410 aa).

Residues Leu116 and 120–122 (GHL) contribute to the (6S)-5,6,7,8-tetrahydrofolate site. Position 225 is an N6-(pyridoxal phosphate)lysine (Lys225). 349-351 (SPF) is a binding site for (6S)-5,6,7,8-tetrahydrofolate.

This sequence belongs to the SHMT family. As to quaternary structure, homodimer. It depends on pyridoxal 5'-phosphate as a cofactor.

It is found in the cytoplasm. It catalyses the reaction (6R)-5,10-methylene-5,6,7,8-tetrahydrofolate + glycine + H2O = (6S)-5,6,7,8-tetrahydrofolate + L-serine. It participates in one-carbon metabolism; tetrahydrofolate interconversion. Its pathway is amino-acid biosynthesis; glycine biosynthesis; glycine from L-serine: step 1/1. Catalyzes the reversible interconversion of serine and glycine with tetrahydrofolate (THF) serving as the one-carbon carrier. This reaction serves as the major source of one-carbon groups required for the biosynthesis of purines, thymidylate, methionine, and other important biomolecules. Also exhibits THF-independent aldolase activity toward beta-hydroxyamino acids, producing glycine and aldehydes, via a retro-aldol mechanism. The protein is Serine hydroxymethyltransferase of Leuconostoc mesenteroides subsp. mesenteroides (strain ATCC 8293 / DSM 20343 / BCRC 11652 / CCM 1803 / JCM 6124 / NCDO 523 / NBRC 100496 / NCIMB 8023 / NCTC 12954 / NRRL B-1118 / 37Y).